The chain runs to 177 residues: MYVPKESQPKQGGGASGKVKDGKRKIVAQNKKARHDYAIIDTYEAGLVLTGTEVKSLRQGRASLTDGFVQIDGNEAWLHNAHIPEYSQGTWTNHTVRRKRKLLLHREEIDKLASKSEETGHTIVPLALYFKDGRAKAEIALARGKKEYDKRQTLREKQDRRESDRAIAAAKRKQRGE.

2 disordered regions span residues 1 to 23 (MYVPKESQPKQGGGASGKVKDGK) and 148 to 177 (YDKRQTLREKQDRRESDRAIAAAKRKQRGE). A compositionally biased stretch (basic and acidic residues) spans 148–165 (YDKRQTLREKQDRRESDR).

This sequence belongs to the SmpB family.

It localises to the cytoplasm. In terms of biological role, required for rescue of stalled ribosomes mediated by trans-translation. Binds to transfer-messenger RNA (tmRNA), required for stable association of tmRNA with ribosomes. tmRNA and SmpB together mimic tRNA shape, replacing the anticodon stem-loop with SmpB. tmRNA is encoded by the ssrA gene; the 2 termini fold to resemble tRNA(Ala) and it encodes a 'tag peptide', a short internal open reading frame. During trans-translation Ala-aminoacylated tmRNA acts like a tRNA, entering the A-site of stalled ribosomes, displacing the stalled mRNA. The ribosome then switches to translate the ORF on the tmRNA; the nascent peptide is terminated with the 'tag peptide' encoded by the tmRNA and targeted for degradation. The ribosome is freed to recommence translation, which seems to be the essential function of trans-translation. In Streptomyces avermitilis (strain ATCC 31267 / DSM 46492 / JCM 5070 / NBRC 14893 / NCIMB 12804 / NRRL 8165 / MA-4680), this protein is SsrA-binding protein.